The following is a 395-amino-acid chain: 8-amino-7-oxononanoate synthase (395 aa).

Lys24 contacts substrate. Position 111–112 (111–112) interacts with pyridoxal 5'-phosphate; it reads GF. His136 lines the substrate pocket. Residues Ser184, 209 to 212, and 240 to 243 each bind pyridoxal 5'-phosphate; these read DDAH and TLSK. Lys243 carries the post-translational modification N6-(pyridoxal phosphate)lysine. Thr357 is a binding site for substrate.

The protein belongs to the class-II pyridoxal-phosphate-dependent aminotransferase family. BioF subfamily. As to quaternary structure, homodimer. Pyridoxal 5'-phosphate is required as a cofactor.

The catalysed reaction is 6-carboxyhexanoyl-[ACP] + L-alanine + H(+) = (8S)-8-amino-7-oxononanoate + holo-[ACP] + CO2. It participates in cofactor biosynthesis; biotin biosynthesis. Its function is as follows. Catalyzes the decarboxylative condensation of pimeloyl-[acyl-carrier protein] and L-alanine to produce 8-amino-7-oxononanoate (AON), [acyl-carrier protein], and carbon dioxide. This is 8-amino-7-oxononanoate synthase from Treponema denticola (strain ATCC 35405 / DSM 14222 / CIP 103919 / JCM 8153 / KCTC 15104).